Consider the following 229-residue polypeptide: uncharacterized protein (229 aa).

22 to 29 (GMIAFGKT) lines the ATP pocket.

This is an uncharacterized protein from Mycoplasma pneumoniae (strain ATCC 29342 / M129 / Subtype 1) (Mycoplasmoides pneumoniae).